Reading from the N-terminus, the 295-residue chain is Ribosomal RNA small subunit methyltransferase A (295 aa).

The S-adenosyl-L-methionine site is built by Asn25, Leu27, Gly52, Glu73, Asp98, and Asn120.

Belongs to the class I-like SAM-binding methyltransferase superfamily. rRNA adenine N(6)-methyltransferase family. RsmA subfamily.

The protein localises to the cytoplasm. The enzyme catalyses adenosine(1518)/adenosine(1519) in 16S rRNA + 4 S-adenosyl-L-methionine = N(6)-dimethyladenosine(1518)/N(6)-dimethyladenosine(1519) in 16S rRNA + 4 S-adenosyl-L-homocysteine + 4 H(+). Its function is as follows. Specifically dimethylates two adjacent adenosines (A1518 and A1519) in the loop of a conserved hairpin near the 3'-end of 16S rRNA in the 30S particle. May play a critical role in biogenesis of 30S subunits. The sequence is that of Ribosomal RNA small subunit methyltransferase A from Desulfotalea psychrophila (strain LSv54 / DSM 12343).